A 407-amino-acid polypeptide reads, in one-letter code: Putative glucose/galactose transporter (407 aa).

A run of 12 helical transmembrane segments spans residues 11–31 (GSLT…DILI), 47–67 (LIQF…GNVI), 70–90 (IGYP…CALF), 96–116 (FGSY…IVCL), 139–159 (VQAF…LLIF), 180–200 (VQMP…IMYL), 225–245 (FVFG…IGSF), 263–283 (HYLV…SVLM), 300–320 (IVLI…ALTF), 321–341 (VGFF…LNLG), 349–369 (GVIS…GAVT), and 378–398 (NLLY…FFAL).

This sequence belongs to the major facilitator superfamily. FHS transporter (TC 2.A.1.7) family.

It is found in the cell inner membrane. Its function is as follows. Intake of glucose and galactose. The sequence is that of Putative glucose/galactose transporter (gluP) from Helicobacter pylori (strain ATCC 700392 / 26695) (Campylobacter pylori).